The chain runs to 181 residues: NADH-quinone oxidoreductase subunit I (181 aa).

4Fe-4S ferredoxin-type domains follow at residues 44-74 and 90-119; these read LNRYPDGLEKCIGCELCAWACPADAIYVEGA and RVYQINYLRCIGCGLCIEACPTRALTMTND. Residues Cys-54, Cys-57, Cys-60, Cys-64, Cys-99, Cys-102, Cys-105, and Cys-109 each contribute to the [4Fe-4S] cluster site.

This sequence belongs to the complex I 23 kDa subunit family. NDH-1 is composed of 14 different subunits. Subunits NuoA, H, J, K, L, M, N constitute the membrane sector of the complex. [4Fe-4S] cluster serves as cofactor.

The protein localises to the cell membrane. The enzyme catalyses a quinone + NADH + 5 H(+)(in) = a quinol + NAD(+) + 4 H(+)(out). In terms of biological role, NDH-1 shuttles electrons from NADH, via FMN and iron-sulfur (Fe-S) centers, to quinones in the respiratory chain. The immediate electron acceptor for the enzyme in this species is believed to be menaquinone. Couples the redox reaction to proton translocation (for every two electrons transferred, four hydrogen ions are translocated across the cytoplasmic membrane), and thus conserves the redox energy in a proton gradient. This Mycobacterium marinum (strain ATCC BAA-535 / M) protein is NADH-quinone oxidoreductase subunit I.